Consider the following 355-residue polypeptide: Phosphoserine aminotransferase (355 aa).

L-glutamate is bound at residue Arg41. Pyridoxal 5'-phosphate contacts are provided by residues 75–76 (AS), Trp99, Thr147, Asp166, and Gln189. Residue Lys190 is modified to N6-(pyridoxal phosphate)lysine. 231–232 (NT) contacts pyridoxal 5'-phosphate.

This sequence belongs to the class-V pyridoxal-phosphate-dependent aminotransferase family. SerC subfamily. In terms of assembly, homodimer. The cofactor is pyridoxal 5'-phosphate.

The protein localises to the cytoplasm. The enzyme catalyses O-phospho-L-serine + 2-oxoglutarate = 3-phosphooxypyruvate + L-glutamate. The catalysed reaction is 4-(phosphooxy)-L-threonine + 2-oxoglutarate = (R)-3-hydroxy-2-oxo-4-phosphooxybutanoate + L-glutamate. It functions in the pathway amino-acid biosynthesis; L-serine biosynthesis; L-serine from 3-phospho-D-glycerate: step 2/3. It participates in cofactor biosynthesis; pyridoxine 5'-phosphate biosynthesis; pyridoxine 5'-phosphate from D-erythrose 4-phosphate: step 3/5. In terms of biological role, catalyzes the reversible conversion of 3-phosphohydroxypyruvate to phosphoserine and of 3-hydroxy-2-oxo-4-phosphonooxybutanoate to phosphohydroxythreonine. In Parabacteroides distasonis (strain ATCC 8503 / DSM 20701 / CIP 104284 / JCM 5825 / NCTC 11152), this protein is Phosphoserine aminotransferase.